A 425-amino-acid polypeptide reads, in one-letter code: Light-independent protochlorophyllide reductase subunit N (425 aa).

[4Fe-4S] cluster contacts are provided by C17, C42, and C103.

It belongs to the BchN/ChlN family. In terms of assembly, protochlorophyllide reductase is composed of three subunits; ChlL, ChlN and ChlB. Forms a heterotetramer of two ChlB and two ChlN subunits. The cofactor is [4Fe-4S] cluster.

The enzyme catalyses chlorophyllide a + oxidized 2[4Fe-4S]-[ferredoxin] + 2 ADP + 2 phosphate = protochlorophyllide a + reduced 2[4Fe-4S]-[ferredoxin] + 2 ATP + 2 H2O. The protein operates within porphyrin-containing compound metabolism; chlorophyll biosynthesis (light-independent). Its function is as follows. Component of the dark-operative protochlorophyllide reductase (DPOR) that uses Mg-ATP and reduced ferredoxin to reduce ring D of protochlorophyllide (Pchlide) to form chlorophyllide a (Chlide). This reaction is light-independent. The NB-protein (ChlN-ChlB) is the catalytic component of the complex. The polypeptide is Light-independent protochlorophyllide reductase subunit N (Parasynechococcus marenigrum (strain WH8102)).